The sequence spans 490 residues: MRIAILGRPNVGKSSLFNRLCKRSLAIVNSQEGTTRDRLYGEIRAWDSIIHVIDTGGVDQESTDRFQKQIHQQALAAAEEASVLLLVVDIRCGITKQDEELAKRLLPLKKPLILVMNKADSQQDLQRIHEFYGLGISDMIATSASHDKHIDLLLERIRQIAQIPVPSVEEQDAVQEDELPSEEAAISLHAFADETLFENESLSQEEASFLEELVAQTATPAPVDRPLKVALIGHPNVGKSSIINALLKEERCITDNSPGTTRDNIDVAYTHNNKEYVFIDTAGLRKTKSIKNSVEWMSSSRTEKAISRTDICLLVIDATQQLSYQDKRILSMIARYKKPHVILVNKWDLMFGVRMEHYVQDLRKMDPYIGQARILCISAKQRRNLLQIFSAIDDVYTIATTKLSTSLVNKVLASAMQRHHPQVINGKRLRIYYAIHKTTTPFTFLLFINSNSLLTKPYELYLKNTLKAAFNLYRVPFDLEYKAKPARKSN.

EngA-type G domains are found at residues 1 to 165 (MRIA…QIPV) and 227 to 400 (LKVA…TIAT). GTP is bound by residues 7 to 14 (GRPNVGKS), 54 to 58 (DTGGV), 117 to 120 (NKAD), 233 to 240 (GHPNVGKS), 280 to 284 (DTAGL), and 345 to 348 (NKWD). Residues 401 to 485 (TKLSTSLVNK…PFDLEYKAKP (85 aa)) enclose the KH-like domain.

Belongs to the TRAFAC class TrmE-Era-EngA-EngB-Septin-like GTPase superfamily. EngA (Der) GTPase family. In terms of assembly, associates with the 50S ribosomal subunit.

GTPase that plays an essential role in the late steps of ribosome biogenesis. The polypeptide is GTPase Der (Chlamydia trachomatis serovar A (strain ATCC VR-571B / DSM 19440 / HAR-13)).